Here is a 242-residue protein sequence, read N- to C-terminus: MRLIVTKNYEEMSKVAAKEMAEDIKRNPEIVLGLATGGTPVGMYKELIRMYNEGELDFSKVTSINLDEYVGLSGDHDQSYRYFMNTNLFDHINIDKNNTFVPNGLAENVEEECMAYDARIQDIGGIDLQLLGLGANGHIGFNEPGEALSVGTNLTDLKESTIEANARFFDSIDDVPRKAITMGLGGIMKAKKIMVIASGEGKAEVVKAMMSGKITTEIPATMLQMHRDVILIVDEDAAKLLK.

The active-site Proton acceptor; for enolization step is aspartate 67. Asparagine 136 functions as the For ring-opening step in the catalytic mechanism. Histidine 138 serves as the catalytic Proton acceptor; for ring-opening step. Glutamate 143 acts as the For ring-opening step in catalysis.

Belongs to the glucosamine/galactosamine-6-phosphate isomerase family. NagB subfamily.

The enzyme catalyses alpha-D-glucosamine 6-phosphate + H2O = beta-D-fructose 6-phosphate + NH4(+). It functions in the pathway amino-sugar metabolism; N-acetylneuraminate degradation; D-fructose 6-phosphate from N-acetylneuraminate: step 5/5. Its function is as follows. Catalyzes the reversible isomerization-deamination of glucosamine 6-phosphate (GlcN6P) to form fructose 6-phosphate (Fru6P) and ammonium ion. The polypeptide is Glucosamine-6-phosphate deaminase (Clostridium perfringens (strain SM101 / Type A)).